A 478-amino-acid polypeptide reads, in one-letter code: Adenosylhomocysteinase (478 aa).

Substrate is bound by residues threonine 67, aspartate 144, and glutamate 204. 205–207 serves as a coordination point for NAD(+); it reads TTT. 2 residues coordinate substrate: lysine 234 and aspartate 238. Residues asparagine 239, 268-273, glutamate 291, asparagine 326, 347-349, and asparagine 392 each bind NAD(+); these read GYGDVG and IGH.

This sequence belongs to the adenosylhomocysteinase family. NAD(+) is required as a cofactor.

The protein localises to the cytoplasm. The enzyme catalyses S-adenosyl-L-homocysteine + H2O = L-homocysteine + adenosine. It functions in the pathway amino-acid biosynthesis; L-homocysteine biosynthesis; L-homocysteine from S-adenosyl-L-homocysteine: step 1/1. In terms of biological role, may play a key role in the regulation of the intracellular concentration of adenosylhomocysteine. The protein is Adenosylhomocysteinase of Nitrosomonas europaea (strain ATCC 19718 / CIP 103999 / KCTC 2705 / NBRC 14298).